A 409-amino-acid polypeptide reads, in one-letter code: MMMMSLNSKQAFSMPHGGSLHVEPKYSALHSTSPGSSAPIAPSASSPSSSSNAGGGGGGGGGGGGGGGRSSSSSSSGSSGGGGSEAMRRACLPTPPSNIFGGLDESLLARAEALAAVDIVSQSKSHHHHPPHHSPFKPDATYHTMNTIPCTSAASSSSVPISHPSALAGTHHHHHHHHHHHHQPHQALEGELLEHLSPGLALGAMAGPDGAVVSTPAHAPHMATMNPMHQAALSMAHAHGLPSHMGCMSDVDADPRDLEAFAERFKQRRIKLGVTQADVGSALANLKIPGVGSLSQSTICRFESLTLSHNNMIALKPILQAWLEEAEKSHREKLTKPELFNGAEKKRKRTSIAAPEKRSLEAYFAIQPRPSSEKIAAIAEKLDLKKNVVRVWFCNQRQKQKRMKYSAGI.

A disordered region spans residues 26–93 (YSALHSTSPG…SEAMRRACLP (68 aa)). Positions 31–52 (STSPGSSAPIAPSASSPSSSSN) are enriched in low complexity. Residues 53–69 (AGGGGGGGGGGGGGGGR) show a composition bias toward gly residues. The required for transcriptional activation stretch occupies residues 91–237 (CLPTPPSNIF…MHQAALSMAH (147 aa)). Residues 110–119 (RAEALAAVDI) carry the POU-IV box motif. A compositionally biased stretch (low complexity) spans 153–166 (AASSSSVPISHPSA). The disordered stretch occupies residues 153 to 188 (AASSSSVPISHPSALAGTHHHHHHHHHHHHQPHQAL). The segment covering 170-184 (THHHHHHHHHHHHQP) has biased composition (basic residues). A Nuclear speckle targeting signal motif is present at residues 171 to 185 (HHHHHHHHHHHHQPH). A required for DNA-binding and transcriptional repression region spans residues 238-409 (AHGLPSHMGC…QKRMKYSAGI (172 aa)). One can recognise a POU-specific domain in the interval 250 to 327 (DVDADPRDLE…ILQAWLEEAE (78 aa)). A DNA-binding region (homeobox) is located at residues 345–404 (KKRKRTSIAAPEKRSLEAYFAIQPRPSSEKIAAIAEKLDLKKNVVRVWFCNQRQKQKRMK).

The protein belongs to the POU transcription factor family. Class-4 subfamily. Interacts with POU4F1; this interaction inhibits both POU4F1 DNA-binding and transcriptional activities. Interacts (C-terminus) with ESR1 (via DNA-binding domain); this interaction increases the estrogen receptor ESR1 transcriptional activity in a DNA- and ligand 17-beta-estradiol-independent manner. Interacts (via C-terminus) with TP53 (via N-terminus). Interacts with DLX1 (via homeobox DNA-binding domain); this interaction suppresses DLX1-mediated transcriptional activity in postnatal retina enhancing retinal ganglion cell (RGC) differentiation. Interacts with DLX2 (via homeobox DNA-binding domain); this interaction enhances RGC differentiation. Interacts (via C-terminus) with ISL1 (via C-terminus). Interacts with ISL2. Interacts with LHX2. As to expression, expressed in the brain. Expressed in the ganglion cell layer of the retina.

It is found in the nucleus. Its subcellular location is the nucleus speckle. The protein localises to the cytoplasm. Its function is as follows. Tissue-specific DNA-binding transcription factor involved in the development and differentiation of target cells. Functions either as activator or repressor modulating the rate of target gene transcription through RNA polymerase II enzyme in a promoter-dependent manner. Binds to the consensus octamer motif 5'-AT[A/T]A[T/A]T[A/T]A-3' of promoter of target genes. Plays a fundamental role in the gene regulatory network essential for retinal ganglion cell (RGC) differentiation. Binds to an octamer site to form a ternary complex with ISL1; cooperates positively with ISL1 and ISL2 to potentiate transcriptional activation of RGC target genes being involved in RGC fate commitment in the developing retina and RGC axon formation and pathfinding. Inhibits DLX1 and DLX2 transcriptional activities preventing DLX1- and DLX2-mediated ability to promote amacrine cell fate specification. In cooperation with TP53 potentiates transcriptional activation of BAX promoter activity increasing neuronal cell apoptosis. Negatively regulates BAX promoter activity in the absence of TP53. Acts as a transcriptional coactivator via its interaction with the transcription factor ESR1 by enhancing its effect on estrogen response element (ERE)-containing promoter. Antagonizes the transcriptional stimulatory activity of POU4F1 by preventing its binding to an octamer motif. Involved in TNFSF11-mediated terminal osteoclast differentiation. The chain is POU domain, class 4, transcription factor 2 from Homo sapiens (Human).